The following is a 117-amino-acid chain: Large ribosomal subunit protein uL18 (117 aa).

The protein belongs to the universal ribosomal protein uL18 family. As to quaternary structure, part of the 50S ribosomal subunit; part of the 5S rRNA/L5/L18/L25 subcomplex. Contacts the 5S and 23S rRNAs.

In terms of biological role, this is one of the proteins that bind and probably mediate the attachment of the 5S RNA into the large ribosomal subunit, where it forms part of the central protuberance. In Proteus mirabilis (strain HI4320), this protein is Large ribosomal subunit protein uL18.